The sequence spans 179 residues: uncharacterized protein (179 aa).

The first 27 residues, 1–27, serve as a signal peptide directing secretion; sequence MNKSMIQSGGYVLLAGLILAMSSTLFA. An intrachain disulfide couples Cys43 to Cys83.

The protein belongs to the fimbrial protein family.

The protein localises to the fimbrium. Part of the yfcOPQRSUV fimbrial operon. Could contribute to adhesion to various surfaces in specific environmental niches. Increases adhesion to eukaryotic T24 bladder epithelial cells in the absence of fim genes. This is an uncharacterized protein from Escherichia coli (strain K12).